A 166-amino-acid chain; its full sequence is Deglycase PYRAB04690 (166 aa).

The region spanning 1–166 is the PfpI endopeptidase domain; sequence MRVLILSADQ…WMREFVKLLK (166 aa). Residue H101 is part of the active site.

The protein belongs to the peptidase C56 family. As to quaternary structure, homohexamer formed by a dimer of trimers that assemble into a hollow ring structure.

It localises to the cytoplasm. It carries out the reaction N(omega)-(1-hydroxy-2-oxopropyl)-L-arginyl-[protein] + H2O = lactate + L-arginyl-[protein] + H(+). The enzyme catalyses N(6)-(1-hydroxy-2-oxopropyl)-L-lysyl-[protein] + H2O = lactate + L-lysyl-[protein] + H(+). The catalysed reaction is S-(1-hydroxy-2-oxopropyl)-L-cysteinyl-[protein] + H2O = lactate + L-cysteinyl-[protein] + H(+). It catalyses the reaction N(omega)-(1-hydroxy-2-oxoethyl)-L-arginyl-[protein] + H2O = L-arginyl-[protein] + glycolate + H(+). It carries out the reaction N(6)-(1-hydroxy-2-oxoethyl)-L-lysyl-[protein] + H2O = glycolate + L-lysyl-[protein] + H(+). The enzyme catalyses S-(1-hydroxy-2-oxoethyl)-L-cysteinyl-[protein] + H2O = glycolate + L-cysteinyl-[protein] + H(+). Its function is as follows. Deglycase that catalyzes the deglycation of the Maillard adducts formed between amino groups of proteins and reactive carbonyl groups of glyoxals. Thus, functions as a protein deglycase that repairs methylglyoxal- and glyoxal-glycated proteins, and releases repaired proteins and lactate or glycolate, respectively. Deglycates cysteine, arginine and lysine residues in proteins, and thus reactivates these proteins by reversing glycation by glyoxals. Acts on early glycation intermediates (hemithioacetals and aminocarbinols), preventing the formation of advanced glycation endproducts (AGE) that cause irreversible damage. Also displays proteolytic activity. This is Deglycase PYRAB04690 from Pyrococcus abyssi (strain GE5 / Orsay).